The chain runs to 213 residues: Nickel-cobalt-cadmium resistance protein NccN (213 aa).

4 consecutive transmembrane segments (helical) span residues 24–44, 48–68, 113–133, and 180–200; these read IGIW…GHSQ, TWIS…ATVG, ESIT…PAVI, and NLAD…VELA.

To A.eutrophus CzcN.

It is found in the cell inner membrane. Functionally, component of the NCC cation-efflux system that confers resistance to nickel, cobalt and cadmium. Appears to be involved in metal specificity but affects only nickel resistance. May be involved in nickel transport. The sequence is that of Nickel-cobalt-cadmium resistance protein NccN (nccN) from Alcaligenes xylosoxydans xylosoxydans (Achromobacter xylosoxidans).